A 1042-amino-acid polypeptide reads, in one-letter code: Aldehyde reductase lnaA (1042 aa).

The tract at residues 29–425 (HAFLNPSAMA…GRRDHQVKVR (397 aa)) is adenylation (A) domain. Residues 532–609 (DNEDSTRGKL…RLAGILEERI (78 aa)) form the Carrier domain. S569 bears the O-(pantetheine 4'-phosphoryl)serine mark. The segment at 655-897 (LTGATGFVGS…FVPVDYVNAV (243 aa)) is short-chain dehydrogenase/reductase (R) domain.

Belongs to the NRP synthetase family.

It catalyses the reaction L-tyrosinal + AMP + diphosphate + NADP(+) = L-tyrosine + ATP + NADPH + H(+). Its pathway is secondary metabolite biosynthesis. Its function is as follows. Non-canonical nonribosomal peptide synthetase; part of the lna gene cluster that mediates the biosynthesis of diastereomeric piperazines. Lna and lnb clusters encode sets of enzymes that produce overlapping sets of previously undescribed metabolites such as piperazinomycin-like metabolites or morpholine. The lna and lnb biosynthetic pathways appear to be part of a signaling network that controls the formation of sclerotia, a resilient overwintering structure. One primary function of the non-canonical nonribosomal peptide synthetases lnaA and lnbA consists in the reduction of L-tyrosine. The presence in the clusters of tailoring enzymes such as the oxidoreductases lnaB, lnbB, lnaE or lnbE, as well as of the cytochrome P450 monooxygenases lnaC, lnaD, or lnbC, might explain formation of various diastereomeric piperazines. This chain is Aldehyde reductase lnaA, found in Aspergillus flavus (strain ATCC 200026 / FGSC A1120 / IAM 13836 / NRRL 3357 / JCM 12722 / SRRC 167).